We begin with the raw amino-acid sequence, 350 residues long: Putative ankyrin repeat protein RBE_0589 (350 aa).

ANK repeat units follow at residues 81-110, 114-151, and 153-182; these read DGFT…NPNI, DIVT…EPTD, and SGWT…NLDI.

This is Putative ankyrin repeat protein RBE_0589 from Rickettsia bellii (strain RML369-C).